Consider the following 144-residue polypeptide: 3-dehydroquinate dehydratase (144 aa).

Catalysis depends on Tyr24, which acts as the Proton acceptor. Positions 73, 79, and 86 each coordinate substrate. The active-site Proton donor is His99. Substrate contacts are provided by residues 100–101 (LS) and Arg110.

This sequence belongs to the type-II 3-dehydroquinase family. As to quaternary structure, homododecamer.

It catalyses the reaction 3-dehydroquinate = 3-dehydroshikimate + H2O. It functions in the pathway metabolic intermediate biosynthesis; chorismate biosynthesis; chorismate from D-erythrose 4-phosphate and phosphoenolpyruvate: step 3/7. Functionally, catalyzes a trans-dehydration via an enolate intermediate. This is 3-dehydroquinate dehydratase from Shewanella sp. (strain ANA-3).